A 318-amino-acid polypeptide reads, in one-letter code: Aspartate carbamoyltransferase catalytic subunit (318 aa).

Residues R59 and T60 each coordinate carbamoyl phosphate. Position 87 (K87) interacts with L-aspartate. Carbamoyl phosphate contacts are provided by R109, H137, and Q140. 2 residues coordinate L-aspartate: R170 and R224. Residues G265 and P266 each contribute to the carbamoyl phosphate site.

Belongs to the aspartate/ornithine carbamoyltransferase superfamily. ATCase family. Heterododecamer (2C3:3R2) of six catalytic PyrB chains organized as two trimers (C3), and six regulatory PyrI chains organized as three dimers (R2).

It carries out the reaction carbamoyl phosphate + L-aspartate = N-carbamoyl-L-aspartate + phosphate + H(+). It participates in pyrimidine metabolism; UMP biosynthesis via de novo pathway; (S)-dihydroorotate from bicarbonate: step 2/3. Its function is as follows. Catalyzes the condensation of carbamoyl phosphate and aspartate to form carbamoyl aspartate and inorganic phosphate, the committed step in the de novo pyrimidine nucleotide biosynthesis pathway. This is Aspartate carbamoyltransferase catalytic subunit from Rhizobium johnstonii (strain DSM 114642 / LMG 32736 / 3841) (Rhizobium leguminosarum bv. viciae).